Reading from the N-terminus, the 231-residue chain is Ribose-5-phosphate isomerase A (231 aa).

Residues 32 to 35 (TGST), 85 to 88 (DGAD), and 98 to 101 (KGGG) each bind substrate. Residue Glu-107 is the Proton acceptor of the active site. Lys-125 is a substrate binding site.

It belongs to the ribose 5-phosphate isomerase family. In terms of assembly, homodimer.

The catalysed reaction is aldehydo-D-ribose 5-phosphate = D-ribulose 5-phosphate. It participates in carbohydrate degradation; pentose phosphate pathway; D-ribose 5-phosphate from D-ribulose 5-phosphate (non-oxidative stage): step 1/1. In terms of biological role, catalyzes the reversible conversion of ribose-5-phosphate to ribulose 5-phosphate. The protein is Ribose-5-phosphate isomerase A of Paraburkholderia phymatum (strain DSM 17167 / CIP 108236 / LMG 21445 / STM815) (Burkholderia phymatum).